Consider the following 997-residue polypeptide: Autophagy-related protein 9 (997 aa).

Topologically, residues 1–318 (MERDEYQLPN…DVYNYYLGNG (318 aa)) are cytoplasmic. Position 19 is a phosphoserine (Ser-19). A compositionally biased stretch (polar residues) spans 29-39 (VNPSLNSQEMS). The interval 29–88 (VNPSLNSQEMSNFPLPDIERGSSLLHSTNDSREDVDENDLRVPESDQGTSTEEEDEVDEE) is disordered. The segment covering 79–88 (TEEEDEVDEE) has biased composition (acidic residues). Glycyl lysine isopeptide (Lys-Gly) (interchain with G-Cter in ubiquitin) cross-links involve residues Lys-113 and Lys-121. Ser-122 carries the post-translational modification Phosphoserine. Disordered stretches follow at residues 127–159 (LVEG…DGFD) and 214–234 (HHDK…NQKH). A Glycyl lysine isopeptide (Lys-Gly) (interchain with G-Cter in ubiquitin) cross-link involves residue Lys-138. Ser-143 and Ser-144 each carry phosphoserine. Acidic residues predominate over residues 144 to 159 (SEEEEDNEFINNDGFD). Residues 221–233 (ANNGPRNINGNQK) are compositionally biased toward polar residues. Residues 319–339 (FYCIILEKILNICTLLFVVFV) form a helical membrane-spanning segment. Topologically, residues 340-376 (STYMGHCVDYSKLPTSHRVSDIIIDKCYSNSITGFTK) are lumenal. The chain crosses the membrane as a helical span at residues 377-397 (FFLWMFYFFVILKIVQLYFDV). Topologically, residues 398–538 (QKLSELQNFY…EELQKRFMLA (141 aa)) are cytoplasmic. Residues 539–559 (GFLNIILAPFLVTYFVLLYFF) lie within the membrane without spanning it. The Cytoplasmic segment spans residues 560–620 (RYFNEYKTSP…DQFPKEKTNL (61 aa)). A helical transmembrane segment spans residues 621 to 641 (FLKFVSFICGSFVAILAFLTV). The Lumenal portion of the chain corresponds to 642–656 (FDPENFLNFEITSDR). Position 657 is a phosphoserine (Ser-657). A helical transmembrane segment spans residues 657–677 (SVIFYITILGAIWSVSRNTIT). Topologically, residues 678–723 (QEYHVFDPEETLKELYEYTHYLPKEWEGRYHKEEIKLEFCKLYNLR) are cytoplasmic. Lys-701 is covalently cross-linked (Glycyl lysine isopeptide (Lys-Gly) (interchain with G-Cter in ubiquitin)). An intramembrane segment occupies 724 to 744 (IVILLRELTSLMITPFVLWFS). At 745 to 997 (LPSSAGRIVD…EYYKKSDVGR (253 aa)) the chain is on the cytoplasmic side. Phosphoserine is present on residues Ser-787 and Ser-792. Phosphothreonine is present on Thr-794. Ser-802 carries the post-translational modification Phosphoserine. Thr-804 carries the phosphothreonine modification. A phosphoserine mark is found at Ser-831, Ser-842, Ser-864, Ser-948, and Ser-969.

Belongs to the ATG9 family. As to quaternary structure, homotrimer; forms a homotrimer with a central pore that forms a path between the two membrane leaflets. Interacts with ATG23 and ATG27 to form a cycling complex for trafficking to the PAS. Interacts (via N-terminus) with ATG11, required for recruitment of ATG9 to the PAS for the Cvt pathway during nutrient-rich conditions. Interacts (via N-terminus) with ATG17; required for recruitment to the PAS during autophagy and starved conditions. Interacts with ATG2 and ATG18; required for the retrieval of ATG9 from the PAS to the cytoplasmic pool. Interacts with ATG41. Interacts with the conserved oligomeric Golgi (COG) complex subunits COG3 and COG4. Interacts with TRS85. In terms of processing, phosphorylated by ATG1; phosphorylation is required for autophagy and cytoplasm to vacuole transport (Cvt) vesicle formation. Phosphorylation by ATG1 regulates ATG18 interaction and preautophagosome elongation. Phosphorylation at Ser-122 is required for selective autophagy by regulating anterograde trafficking and interaction with ATG23 and ATG27. Phosphorylation at Ser-122 prevents ubiquitination by the SCF(MET30) complex. Post-translationally, ubiquitinated by the SCF(MET30) complex in normal conditions, leading to its degradation by the proteasome, thereby preventing inappropriate induction of autophagy. Ubiquitination by the SCF(MET30) complex is prevented by phosphorylation at Ser-122.

The protein resides in the preautophagosomal structure membrane. The protein localises to the cytoplasmic vesicle membrane. It is found in the golgi apparatus membrane. Its subcellular location is the endoplasmic reticulum membrane. It localises to the mitochondrion membrane. The catalysed reaction is a 1,2-diacyl-sn-glycero-3-phosphocholine(in) = a 1,2-diacyl-sn-glycero-3-phosphocholine(out). The enzyme catalyses a 1,2-diacyl-sn-glycero-3-phospho-L-serine(in) = a 1,2-diacyl-sn-glycero-3-phospho-L-serine(out). It catalyses the reaction a 1,2-diacyl-sn-glycero-3-phosphoethanolamine(in) = a 1,2-diacyl-sn-glycero-3-phosphoethanolamine(out). It carries out the reaction a 1,2-diacyl-sn-glycero-3-phospho-(1D-myo-inositol-3-phosphate)(in) = a 1,2-diacyl-sn-glycero-3-phospho-(1D-myo-inositol-3-phosphate)(out). Its function is as follows. Phospholipid scramblase involved in autophagy and cytoplasm to vacuole transport (Cvt) vesicle formation. Cycles between the preautophagosomal structure/phagophore assembly site (PAS) and the cytoplasmic vesicle pool and supplies membrane for the growing autophagosome. Lipid scramblase activity plays a key role in preautophagosomal structure/phagophore assembly by distributing the phospholipids that arrive through ATG2 from the cytoplasmic to the luminal leaflet of the bilayer, thereby driving autophagosomal membrane expansion. Required for mitophagy. Also involved in endoplasmic reticulum-specific autophagic process and is essential for the survival of cells subjected to severe ER stress. Different machineries are required for anterograde trafficking to the PAS during either the Cvt pathway or bulk autophagy and for retrograde trafficking. Recruits vesicle-tethering proteins TRS85 and YPT1 to the autophagosome formation site. Also recruits ATG23 and ATG8 to the PAS. The protein is Autophagy-related protein 9 of Saccharomyces cerevisiae (strain YJM789) (Baker's yeast).